A 584-amino-acid chain; its full sequence is 65 kDa protein (584 aa).

The region spanning 459–548 is the Toprim domain; sequence YDLYIAESAI…TKKVENWLPP (90 aa).

The polypeptide is 65 kDa protein (Zymomonas mobilis subsp. mobilis (strain ATCC 10988 / DSM 424 / LMG 404 / NCIMB 8938 / NRRL B-806 / ZM1)).